Consider the following 521-residue polypeptide: Probable methylmalonate-semialdehyde/malonate-semialdehyde dehydrogenase [acylating], mitochondrial (521 aa).

Ala170, Phe172, Lys196, Glu199, Arg200, and Ser249 together coordinate NAD(+). The active-site Nucleophile is the Cys304. Glu404 lines the NAD(+) pocket.

Belongs to the aldehyde dehydrogenase family. As to quaternary structure, homotetramer.

The protein resides in the mitochondrion. The enzyme catalyses 2-methyl-3-oxopropanoate + NAD(+) + CoA + H2O = propanoyl-CoA + hydrogencarbonate + NADH + H(+). It catalyses the reaction 3-oxopropanoate + NAD(+) + CoA + H2O = hydrogencarbonate + acetyl-CoA + NADH + H(+). In terms of biological role, probable malonate and methylmalonate semialdehyde dehydrogenase involved in the catabolism of valine, thymine, and compounds catabolized by way of beta-alanine, including uracil and cytidine. The polypeptide is Probable methylmalonate-semialdehyde/malonate-semialdehyde dehydrogenase [acylating], mitochondrial (Anopheles gambiae (African malaria mosquito)).